The sequence spans 572 residues: Methionine--tRNA ligase (572 aa).

The 'HIGH' region signature appears at 11-21 (PYINGVKHLGN). Zn(2+) is bound by residues Cys143, Cys146, Cys156, and Cys159. The 'KMSKS' region motif lies at 341-345 (KFSTS). Thr344 contacts ATP.

Belongs to the class-I aminoacyl-tRNA synthetase family. MetG type 1 subfamily. As to quaternary structure, monomer. Zn(2+) is required as a cofactor.

The protein localises to the cytoplasm. It catalyses the reaction tRNA(Met) + L-methionine + ATP = L-methionyl-tRNA(Met) + AMP + diphosphate. Functionally, is required not only for elongation of protein synthesis but also for the initiation of all mRNA translation through initiator tRNA(fMet) aminoacylation. This chain is Methionine--tRNA ligase, found in Maricaulis maris (strain MCS10) (Caulobacter maris).